The following is a 514-amino-acid chain: MRKINVFDTSLRDGEQMPGIALTVKEKLEIARQLERLGVDIIEAGFPASSPGDFQAVKEIAETVKGSSITGLARAKKSDIDSAWEALKSSAEPRVHVFLATSPIHMEHKLKLTPDQVVERAVESVRYAAEKFPHVQFSAEDANRSEWPFLKRIIEAAIDAGASVINLPDTVGYRTPEEISKLFEFVTENVKNIDRAILSTHNHDDLGMGVANSLAAISAGAGQVECTINGIGERAGNAALEEIAVALQIRSDYYQAKTGLKLSELKRTSALVSRLTSMNVPGNKAVVGANAFAHESGIHQDGMLKNKETYEIITPELVGATSSLPLGKHSGRHAFKTKLNELGFSGSDEKLQTIFSAFKQLCDKKKEVTEDDLYALIADATDDQDSTAYELTALQVTYGMNHVPTATIRLKKQDDREIEEAGTGSGSVEAIYNTLAKMTGGNYSLADYRIQSVNGGEDALAEVHVRIQADDFEQSGRGVAHDVLEASAKAYLHAVNRVIARKHYAKREMAKVES.

One can recognise a Pyruvate carboxyltransferase domain in the interval 4–266; the sequence is INVFDTSLRD…KTGLKLSELK (263 aa). Mn(2+) contacts are provided by Asp-13, His-201, His-203, and Asn-237. The interval 390–514 is regulatory domain; sequence ELTALQVTYG…AKREMAKVES (125 aa).

It belongs to the alpha-IPM synthase/homocitrate synthase family. LeuA type 1 subfamily. As to quaternary structure, homodimer. The cofactor is Mn(2+).

It is found in the cytoplasm. It carries out the reaction 3-methyl-2-oxobutanoate + acetyl-CoA + H2O = (2S)-2-isopropylmalate + CoA + H(+). It functions in the pathway amino-acid biosynthesis; L-leucine biosynthesis; L-leucine from 3-methyl-2-oxobutanoate: step 1/4. Functionally, catalyzes the condensation of the acetyl group of acetyl-CoA with 3-methyl-2-oxobutanoate (2-ketoisovalerate) to form 3-carboxy-3-hydroxy-4-methylpentanoate (2-isopropylmalate). The polypeptide is 2-isopropylmalate synthase (Shouchella clausii (strain KSM-K16) (Alkalihalobacillus clausii)).